Reading from the N-terminus, the 185-residue chain is Threonylcarbamoyl-AMP synthase (185 aa).

The 181-residue stretch at 5 to 185 folds into the YrdC-like domain; the sequence is NWRVRLAARI…RDGRTGQRLR (181 aa).

The protein belongs to the SUA5 family. TsaC subfamily.

It is found in the cytoplasm. It catalyses the reaction L-threonine + hydrogencarbonate + ATP = L-threonylcarbamoyladenylate + diphosphate + H2O. Its function is as follows. Required for the formation of a threonylcarbamoyl group on adenosine at position 37 (t(6)A37) in tRNAs that read codons beginning with adenine. Catalyzes the conversion of L-threonine, HCO(3)(-)/CO(2) and ATP to give threonylcarbamoyl-AMP (TC-AMP) as the acyladenylate intermediate, with the release of diphosphate. This chain is Threonylcarbamoyl-AMP synthase, found in Nitrosococcus oceani (strain ATCC 19707 / BCRC 17464 / JCM 30415 / NCIMB 11848 / C-107).